Reading from the N-terminus, the 61-residue chain is Small ribosomal subunit protein uS14 (61 aa).

The Zn(2+) site is built by cysteine 24, cysteine 27, cysteine 40, and cysteine 43.

This sequence belongs to the universal ribosomal protein uS14 family. Zinc-binding uS14 subfamily. Part of the 30S ribosomal subunit. Contacts proteins S3 and S10. The cofactor is Zn(2+).

Its function is as follows. Binds 16S rRNA, required for the assembly of 30S particles and may also be responsible for determining the conformation of the 16S rRNA at the A site. The polypeptide is Small ribosomal subunit protein uS14 (Rubrobacter xylanophilus (strain DSM 9941 / JCM 11954 / NBRC 16129 / PRD-1)).